The chain runs to 310 residues: Syntaxin-related protein KNOLLE (310 aa).

An N-acetylmethionine modification is found at Met1. Residues 1 to 283 are Cytoplasmic-facing; the sequence is MNDLMTKSFM…AKSHQRNSRK (283 aa). Positions 94-159 form a coiled coil; the sequence is NEIVSGLRKA…FQGLRQKMMS (66 aa). The 63-residue stretch at 212–274 folds into the t-SNARE coiled-coil homology domain; it reads VVEIQDRYDA…ADGANELKTA (63 aa). Residues 284 to 304 traverse the membrane as a helical; Anchor for type IV membrane protein segment; that stretch reads WMCIGIIVLLLIILIVVIPII. At 305-310 the chain is on the vesicular side; that stretch reads TSFSSS.

This sequence belongs to the syntaxin family. In terms of assembly, interacts with SNAP33 and/or NPSN11 to form a t-SNARE complex and with KEULE. Abundant in flowers and developing siliques. A low level expression is seen in the seedlings, roots, and leaves.

It is found in the membrane. Its function is as follows. Involved in cytokinesis. Acts as a cell plate-specific syntaxin, required for the fusion of vesicles at the plane of cell division. The protein is Syntaxin-related protein KNOLLE (KN) of Arabidopsis thaliana (Mouse-ear cress).